Consider the following 142-residue polypeptide: Nucleoside diphosphate kinase (142 aa).

Positions 11, 59, 87, 93, 104, and 114 each coordinate ATP. His117 (pros-phosphohistidine intermediate) is an active-site residue.

This sequence belongs to the NDK family. Homotetramer. Mg(2+) serves as cofactor.

It is found in the cytoplasm. It carries out the reaction a 2'-deoxyribonucleoside 5'-diphosphate + ATP = a 2'-deoxyribonucleoside 5'-triphosphate + ADP. The catalysed reaction is a ribonucleoside 5'-diphosphate + ATP = a ribonucleoside 5'-triphosphate + ADP. Functionally, major role in the synthesis of nucleoside triphosphates other than ATP. The ATP gamma phosphate is transferred to the NDP beta phosphate via a ping-pong mechanism, using a phosphorylated active-site intermediate. This Aeromonas salmonicida (strain A449) protein is Nucleoside diphosphate kinase.